The primary structure comprises 406 residues: Accessory Sec system protein translocase subunit SecY2 (406 aa).

The next 10 helical transmembrane spans lie at 14–34 (SWTVLFLFIYVLGSHLVLPFI), 63–83 (FSLFSVGLSPWMSAMILWQMF), 108–128 (FAIALIQSLAVSLSLPIEVGI), 131–151 (GLAILTNTILLIAGTFFLVWL), 156–176 (SFFGIGGSIVILMASMVANLP), 190–210 (LPIILSLIIMGLLFLYIAVIV), 246–266 (FMYAISLVSIPQYLLILIQIL), 285–305 (PIWLVLYQVVLFVLGIAFAFV), 344–364 (AVIGAIYTVIMAGGPMMIVLI), and 368–388 (YLQLSMIPGMFLIYSGMVYNV).

This sequence belongs to the SecY/SEC61-alpha family. SecY2 subfamily. As to quaternary structure, component of the accessory SecA2/SecY2 protein translocase complex required to export cell wall proteins. May form heterotrimers with SecE and SecG subunits.

The protein resides in the cell membrane. In terms of biological role, part of the accessory SecA2/SecY2 system specifically required for export of possible cell wall proteins. The central subunit of a protein translocation channel. The polypeptide is Accessory Sec system protein translocase subunit SecY2 (Streptococcus salivarius (strain CCHSS3)).